A 78-amino-acid chain; its full sequence is Chassatide C4 (78 aa).

A signal peptide spans 1 to 23; the sequence is MAKFATQLFLLTASVVMLEVQSS. Positions 24-42 are cleaved as a propeptide — removed in mature form; it reads IVIMQDPDLGRKLIMNPAN. Residues 43–71 constitute a cross-link (cyclopeptide (Gly-Asn)); the sequence is GASCGETCFTGICFTAGCSCNPWPTCTRN. Disulfide bonds link C46–C60, C50–C62, and C55–C68. Positions 72–78 are cleaved as a propeptide — removed in mature form; sequence GLNPESI.

Post-translationally, this is a cyclic peptide.

Its function is as follows. Probably participates in a plant defense mechanism. This chain is Chassatide C4, found in Chassalia chartacea (Chassalia curviflora).